The chain runs to 144 residues: Large ribosomal subunit protein eL27 (144 aa).

The protein belongs to the eukaryotic ribosomal protein eL27 family.

The protein resides in the cytoplasm. The chain is Large ribosomal subunit protein eL27 (RPL27) from Tetrahymena thermophila.